Here is a 459-residue protein sequence, read N- to C-terminus: tRNA modification GTPase MnmE (459 aa).

3 residues coordinate (6S)-5-formyl-5,6,7,8-tetrahydrofolate: Arg-29, Glu-91, and Arg-130. A TrmE-type G domain is found at 225–381; that stretch reads GVKVAIVGRP…LEEALEQLVT (157 aa). Residue Asn-235 participates in K(+) binding. GTP is bound by residues 235–240, 254–260, and 279–282; these read NVGKSS, TDLPGTT, and DTAG. Residue Ser-239 coordinates Mg(2+). K(+) contacts are provided by Thr-254, Leu-256, and Thr-259. Thr-260 is a Mg(2+) binding site. Residue Lys-459 coordinates (6S)-5-formyl-5,6,7,8-tetrahydrofolate.

It belongs to the TRAFAC class TrmE-Era-EngA-EngB-Septin-like GTPase superfamily. TrmE GTPase family. As to quaternary structure, homodimer. Heterotetramer of two MnmE and two MnmG subunits. K(+) serves as cofactor.

Its subcellular location is the cytoplasm. Exhibits a very high intrinsic GTPase hydrolysis rate. Involved in the addition of a carboxymethylaminomethyl (cmnm) group at the wobble position (U34) of certain tRNAs, forming tRNA-cmnm(5)s(2)U34. This is tRNA modification GTPase MnmE from Synechococcus sp. (strain JA-2-3B'a(2-13)) (Cyanobacteria bacterium Yellowstone B-Prime).